A 1503-amino-acid polypeptide reads, in one-letter code: Rho GTPase-activating protein 5 (1503 aa).

4 consecutive FF domains span residues 267–325 (QLVV…HIEQ), 366–420 (KLME…HVQH), 427–481 (RIEM…HQRE), and 482–548 (IVEK…HIGF). Tyrosine 550 is subject to 3'-nitrotyrosine. Phosphoserine occurs at positions 590 and 765. The pG1 pseudoGTPase domain maps to 590-763 (STNIDKVNLF…LESVKHNLDV (174 aa)). Residues 779-944 (RIVMCAMCGD…FSDVLEKKNM (166 aa)) form the pG2 pseudoGTPase domain. A phosphoserine mark is found at serine 951 and serine 968. Disordered regions lie at residues 975–1004 (YNNYPDSDDDTEAPPPYSPIGDDVQLLPTP), 1022–1050 (HSTPNCHDHERNHKVPPPIKPKPVVPKTN), and 1069–1091 (NPRKQTSRVPLAHPEDMDSSDNY). Residues 1036 to 1045 (VPPPIKPKPV) show a composition bias toward pro residues. Serine 1115 is subject to Phosphoserine. Disordered stretches follow at residues 1129–1157 (NTQGDEENGFSDRTSKGHGERRPSKYKYK) and 1169–1255 (YRRT…TRRN). The segment covering 1141–1151 (RTSKGHGERRP) has biased composition (basic and acidic residues). Phosphoserine occurs at positions 1196, 1203, and 1219. The Rho-GAP domain occupies 1263–1450 (MPLQDLVTAE…TFIQQCQFFF (188 aa)).

May interact with RASA1/p120GAP. As to expression, expressed in spinal cord, cerebellum, kidney, testis and lung.

It is found in the cytoplasm. Its subcellular location is the cell membrane. Functionally, GTPase-activating protein for Rho family members. This Mus musculus (Mouse) protein is Rho GTPase-activating protein 5 (Arhgap5).